The sequence spans 102 residues: Large ribosomal subunit protein bL21 (102 aa).

Belongs to the bacterial ribosomal protein bL21 family. As to quaternary structure, part of the 50S ribosomal subunit. Contacts protein L20.

Functionally, this protein binds to 23S rRNA in the presence of protein L20. The polypeptide is Large ribosomal subunit protein bL21 (Geobacter sp. (strain M21)).